Consider the following 571-residue polypeptide: Hemagglutinin-neuraminidase (571 aa).

Residues 1 to 26 (MDRAVSRVALENEEREAKNTWRFVFR) lie on the Intravirion side of the membrane. The chain crosses the membrane as a helical span at residues 27–47 (IAILLLIVITLAISAAALVYS). The Virion surface segment spans residues 48-571 (MEASTPGDLV…LVEILKNDGV (524 aa)). Asparagine 119 is a glycosylation site (N-linked (GlcNAc...) asparagine; by host). Residues 124-152 (GAPVHDPDYIGGIGKELIVDDASDVTSFY) form an important for interaction with fusion/F protein region. Disulfide bonds link cysteine 172/cysteine 196, cysteine 186/cysteine 247, and cysteine 238/cysteine 251. The tract at residues 234-239 (NRKSCS) is involved in neuraminidase activity. N-linked (GlcNAc...) asparagine; by host glycans are attached at residues asparagine 341 and asparagine 433. 2 disulfide bridges follow: cysteine 344–cysteine 461 and cysteine 455–cysteine 465. N-linked (GlcNAc...) asparagine; by host glycosylation is found at asparagine 481, asparagine 508, and asparagine 538.

Belongs to the paramyxoviruses hemagglutinin-neuraminidase family. As to quaternary structure, homotetramer; composed of disulfide-linked homodimers. Interacts with F protein trimer. Interacts with host CG-1B; this interaction inhibits viral adsorption and replication rather than internalization.

It localises to the virion membrane. It is found in the host cell membrane. It catalyses the reaction Hydrolysis of alpha-(2-&gt;3)-, alpha-(2-&gt;6)-, alpha-(2-&gt;8)- glycosidic linkages of terminal sialic acid residues in oligosaccharides, glycoproteins, glycolipids, colominic acid and synthetic substrates.. In terms of biological role, mediates the viral entry into the host cell together with fusion/F protein. Attaches the virus to sialic acid-containing cell receptors and thereby initiates infection. Binding of HN protein to the receptor induces a conformational change that allows the F protein to trigger virion/cell membranes fusion. Its function is as follows. Neuraminidase activity ensures the efficient spread of the virus by dissociating the mature virions from the neuraminic acid containing glycoproteins. This chain is Hemagglutinin-neuraminidase (HN), found in Gallus gallus (Chicken).